The primary structure comprises 142 residues: Large ribosomal subunit protein bL17 (142 aa).

The protein belongs to the bacterial ribosomal protein bL17 family. Part of the 50S ribosomal subunit. Contacts protein L32.

This Chlamydia abortus (strain DSM 27085 / S26/3) (Chlamydophila abortus) protein is Large ribosomal subunit protein bL17.